Consider the following 384-residue polypeptide: Substance-K receptor (384 aa).

At 1–32 (MGAHAIVTDANISSSLENNTTGITAFSMPGWQ) the chain is on the extracellular side. Residues Asn-11, Asn-18, and Asn-19 are each glycosylated (N-linked (GlcNAc...) asparagine). The helical transmembrane segment at 33 to 56 (LALWATAYLVLVLVAVTGNATVIW) threads the bilayer. Topologically, residues 57–69 (IILAHQRMRTVTN) are cytoplasmic. A helical membrane pass occupies residues 70-90 (YFIVNLALADLCMAAFNAAFN). The Extracellular portion of the chain corresponds to 91 to 107 (FVYASHNIWYFGRAFCH). Cys-106 and Cys-181 are joined by a disulfide. The helical transmembrane segment at 108 to 129 (FQNLFPITAMFVSIYSMTAIAA) threads the bilayer. At 130–149 (DRYVAIVHPFQPRLSAPGTR) the chain is on the cytoplasmic side. A helical transmembrane segment spans residues 150–170 (AVIAGIWLLALALAFPQCFYS). Over 171–196 (TITMDQGATKCVVVWPEDNGSKMLLL) the chain is Extracellular. Residues 197-218 (YHLVVIALIYVLPLLVMLLAYS) form a helical membrane-spanning segment. The Cytoplasmic portion of the chain corresponds to 219-251 (VIGLTLWRREVPRHQVHGASLRHLRAKKKFVKT). Residues 252–272 (MVLVVVTFAICWLPYHFYFIL) form a helical membrane-spanning segment. Residues 273–290 (GSFQEDIYYHKFIQQVYL) are Extracellular-facing. The chain crosses the membrane as a helical span at residues 291 to 310 (ALFWLAMSSTMYNPIIYCCL). At 311–384 (NHRFRSGFRL…GPQDGLPDEP (74 aa)) the chain is on the cytoplasmic side. Cys-324 carries S-palmitoyl cysteine lipidation.

This sequence belongs to the G-protein coupled receptor 1 family.

It localises to the cell membrane. Functionally, this is a receptor for the tachykinin neuropeptide substance K (neurokinin A). It is associated with G proteins that activate a phosphatidylinositol-calcium second messenger system. This is Substance-K receptor (TACR2) from Canis lupus familiaris (Dog).